A 431-amino-acid polypeptide reads, in one-letter code: Divalent metal cation transporter MntH (431 aa).

11 helical membrane-spanning segments follow: residues 33 to 53, 61 to 81, 110 to 130, 141 to 161, 170 to 190, 211 to 231, 258 to 278, 307 to 327, 347 to 367, 368 to 388, and 406 to 426; these read LLKFLGPAFVVSVAYIDPGNF, SSFNYNLIWVILWSNLMAIFL, WIFWIVGELGAMATDLAEFIG, IPMIYAGLLTGVLTFIIVYME, TIIAALIAVICVAYTIELFLA, AVLIAVGMLGATVMPHVIYLH, ILIAMNIAFVVNAAMVIVSAA, GAFGIALLASGLSSSAVGTMA, IITMLPALIIIALGINPMRVL, VLSQVALSFILPFPIIQMLLI, and IVGFIIATMIILLNIILLYLT.

This sequence belongs to the NRAMP family.

It is found in the cell membrane. H(+)-stimulated, divalent metal cation uptake system. This is Divalent metal cation transporter MntH from Clostridium acetobutylicum (strain ATCC 824 / DSM 792 / JCM 1419 / IAM 19013 / LMG 5710 / NBRC 13948 / NRRL B-527 / VKM B-1787 / 2291 / W).